Here is a 324-residue protein sequence, read N- to C-terminus: Glyoxylate/hydroxypyruvate reductase B (324 aa).

Catalysis depends on residues arginine 237 and glutamate 266. Catalysis depends on histidine 285, which acts as the Proton donor.

Belongs to the D-isomer specific 2-hydroxyacid dehydrogenase family. GhrB subfamily. Homodimer.

The protein localises to the cytoplasm. The enzyme catalyses glycolate + NADP(+) = glyoxylate + NADPH + H(+). It catalyses the reaction (R)-glycerate + NAD(+) = 3-hydroxypyruvate + NADH + H(+). The catalysed reaction is (R)-glycerate + NADP(+) = 3-hydroxypyruvate + NADPH + H(+). Its function is as follows. Catalyzes the NADPH-dependent reduction of glyoxylate and hydroxypyruvate into glycolate and glycerate, respectively. This Salmonella agona (strain SL483) protein is Glyoxylate/hydroxypyruvate reductase B.